The following is a 325-amino-acid chain: GMP reductase (325 aa).

Cysteine 173 functions as the Thioimidate intermediate in the catalytic mechanism. Residue 202 to 225 (IIADGGIRHHGDIAKSVRFGAAMV) participates in NADP(+) binding.

Belongs to the IMPDH/GMPR family. GuaC type 2 subfamily.

The catalysed reaction is IMP + NH4(+) + NADP(+) = GMP + NADPH + 2 H(+). Functionally, catalyzes the irreversible NADPH-dependent deamination of GMP to IMP. It functions in the conversion of nucleobase, nucleoside and nucleotide derivatives of G to A nucleotides, and in maintaining the intracellular balance of A and G nucleotides. In Leptothrix cholodnii (strain ATCC 51168 / LMG 8142 / SP-6) (Leptothrix discophora (strain SP-6)), this protein is GMP reductase.